The primary structure comprises 297 residues: MSKKPTTKKEVQTTGHQWDGIEELNTPLPRWWLWTFYATIIWGVAYSIAMPAWPIFSDKATPGLLGSSTRADVEKDIAKFAEMNKAVEEKLVATDLTAIAADPELVTYTRNAGAAVFRTWCAQCHGAGAGGNTGFPSLLDGDWLHGGAIETIYTNVKHGIRDPLDPDTLLVANMPAHLTDELLEPAQIDEVVQYVLQISGQPADEVKATAGQQIFAENCASCHGEDAKGLVEMGAPNLTDGIWLYGGDVATLTSTIQYGRGGVMPSWSWAADGAKPRLSEAQIRAVASYVHSLGGGQ.

Over 1–35 the chain is Cytoplasmic; sequence MSKKPTTKKEVQTTGHQWDGIEELNTPLPRWWLWT. A helical membrane pass occupies residues 36 to 56; sequence FYATIIWGVAYSIAMPAWPIF. Over 57–297 the chain is Periplasmic; sequence SDKATPGLLG…SYVHSLGGGQ (241 aa). Cytochrome c domains lie at 108–199 and 206–294; these read YTRN…LQIS and VKAT…HSLG. Heme c contacts are provided by Cys-121, Cys-124, His-125, Met-174, Cys-219, Cys-222, His-223, and Met-264.

It belongs to the CcoP / FixP family. In terms of assembly, component of the cbb3-type cytochrome c oxidase at least composed of CcoN, CcoO, CcoQ and CcoP. Interacts with CcoQ. Heme c serves as cofactor.

Its subcellular location is the cell inner membrane. It functions in the pathway energy metabolism; oxidative phosphorylation. Its function is as follows. C-type cytochrome. Part of the cbb3-type cytochrome c oxidase complex. CcoP subunit is required for transferring electrons from donor cytochrome c via its heme groups to CcoO subunit. From there, electrons are shuttled to the catalytic binuclear center of CcoN subunit where oxygen reduction takes place. The complex also functions as a proton pump. In Rhodobacter capsulatus (Rhodopseudomonas capsulata), this protein is Cbb3-type cytochrome c oxidase subunit CcoP.